We begin with the raw amino-acid sequence, 856 residues long: Cyclic di-GMP phosphodiesterase PdeB (856 aa).

2 consecutive transmembrane segments (helical) span residues 7–27 (ILVFIVGFCLPAVVLVSYCLG) and 230–250 (WVSLAVILLGILIVALGYVWL). The 48-residue stretch at 303–350 (QKERGKITLESIAEAVILTDIEAKVIYMNPKAETLLEVASSNAVGESL) folds into the PAS domain. Positions 454 to 587 (RSLAVCYLDL…GTNQIHIYDD (134 aa)) constitute a GGDEF domain. The EAL domain maps to 598 to 852 (APKWAVRIAQ…SYCEQFETRL (255 aa)).

It is found in the cell membrane. It catalyses the reaction 3',3'-c-di-GMP + H2O = 5'-phosphoguanylyl(3'-&gt;5')guanosine + H(+). Affects motility and biofilm formation, and is linked to the regulation of sulfate uptake and assimilation. The sequence is that of Cyclic di-GMP phosphodiesterase PdeB (pdeB) from Shewanella oneidensis (strain ATCC 700550 / JCM 31522 / CIP 106686 / LMG 19005 / NCIMB 14063 / MR-1).